The chain runs to 263 residues: Glutamate/glutamine/aspartate/asparagine transport ATP-binding protein BztD (263 aa).

The region spanning Ile-23–Leu-257 is the ABC transporter domain. Gly-55 to Ser-62 contributes to the ATP binding site.

This sequence belongs to the ABC transporter superfamily. BztB and BztC form a heterodimer which can form a membrane complex with a homodimer of BztD.

It localises to the cell membrane. Its function is as follows. Part of a binding-protein-dependent transport system for glutamate, glutamine, aspartate, asparagine. Probably responsible for energy coupling to the transport system. The sequence is that of Glutamate/glutamine/aspartate/asparagine transport ATP-binding protein BztD (bztD) from Rhodobacter capsulatus (strain ATCC BAA-309 / NBRC 16581 / SB1003).